The primary structure comprises 215 residues: Ribonuclease HII (215 aa).

One can recognise an RNase H type-2 domain in the interval G24–D215. A divalent metal cation contacts are provided by D30, E31, and D125.

Belongs to the RNase HII family. Mn(2+) is required as a cofactor. The cofactor is Mg(2+).

It localises to the cytoplasm. The enzyme catalyses Endonucleolytic cleavage to 5'-phosphomonoester.. In terms of biological role, endonuclease that specifically degrades the RNA of RNA-DNA hybrids. The protein is Ribonuclease HII of Zymomonas mobilis subsp. mobilis (strain ATCC 31821 / ZM4 / CP4).